The chain runs to 317 residues: Transaldolase 1 (317 aa).

Lys132 acts as the Schiff-base intermediate with substrate in catalysis.

It belongs to the transaldolase family. Type 1 subfamily. In terms of assembly, homodimer.

Its subcellular location is the cytoplasm. The catalysed reaction is D-sedoheptulose 7-phosphate + D-glyceraldehyde 3-phosphate = D-erythrose 4-phosphate + beta-D-fructose 6-phosphate. The protein operates within carbohydrate degradation; pentose phosphate pathway; D-glyceraldehyde 3-phosphate and beta-D-fructose 6-phosphate from D-ribose 5-phosphate and D-xylulose 5-phosphate (non-oxidative stage): step 2/3. Transaldolase is important for the balance of metabolites in the pentose-phosphate pathway. The chain is Transaldolase 1 from Shigella sonnei (strain Ss046).